The sequence spans 460 residues: Chromosomal replication initiator protein DnaA (460 aa).

Positions 1–84 are domain I, interacts with DnaA modulators; that stretch reads MAVSLWQQCI…RFDIGSRPSA (84 aa). A domain II region spans residues 84 to 123; sequence AKKPEPAPVAAVRVPNPQTKASVGTSFNTTEPVANTNHRS. The segment at 103–123 is disordered; it reads KASVGTSFNTTEPVANTNHRS. A domain III, AAA+ region region spans residues 124–340; that stretch reads NINPTYQFDN…GALNRVIANA (217 aa). ATP is bound by residues Gly-168, Gly-170, Lys-171, and Thr-172. A domain IV, binds dsDNA region spans residues 341 to 460; sequence NFTGRPITID…YANLIRTLSS (120 aa).

It belongs to the DnaA family. As to quaternary structure, oligomerizes as a right-handed, spiral filament on DNA at oriC.

The protein localises to the cytoplasm. Plays an essential role in the initiation and regulation of chromosomal replication. ATP-DnaA binds to the origin of replication (oriC) to initiate formation of the DNA replication initiation complex once per cell cycle. Binds the DnaA box (a 9 base pair repeat at the origin) and separates the double-stranded (ds)DNA. Forms a right-handed helical filament on oriC DNA; dsDNA binds to the exterior of the filament while single-stranded (ss)DNA is stabiized in the filament's interior. The ATP-DnaA-oriC complex binds and stabilizes one strand of the AT-rich DNA unwinding element (DUE), permitting loading of DNA polymerase. After initiation quickly degrades to an ADP-DnaA complex that is not apt for DNA replication. Binds acidic phospholipids. The chain is Chromosomal replication initiator protein DnaA from Shewanella sp. (strain MR-4).